We begin with the raw amino-acid sequence, 552 residues long: Putative transport protein APL_0966 (552 aa).

Helical transmembrane passes span 4–24, 29–49, 65–85, 95–115, and 161–181; these read IAIIVSLLSLVAVLGLWIGHI, VGLGIGGVLFGGIIISHCTHL, FGLILFVYSIGIQVGPGFFAS, GFAVMIVGLSGILVALIHKLF, and IAYPFGIIGILLSMWLIRIIF. RCK C-terminal domains lie at 190-275 and 277-360; these read QEFD…ILGE and ADVS…IIGD. Helical transmembrane passes span 370 to 390, 402 to 424, 438 to 458, 463 to 483, 492 to 512, and 529 to 549; these read MLPIFVGIGLGVLLGSLPLYI, AGGPLVVALILARIGSIGKLYWF, IVLFLSVVGLKAGANFLDTLL, LAWMGYGAIITFIPLIVTGFV, YLSLCGLLSGAMTDPPALAFA, and VYPLVMFLRIILPQLLAILLW.

It belongs to the AAE transporter (TC 2.A.81) family. YidE subfamily.

The protein resides in the cell membrane. The chain is Putative transport protein APL_0966 from Actinobacillus pleuropneumoniae serotype 5b (strain L20).